We begin with the raw amino-acid sequence, 327 residues long: Acetyl-coenzyme A carboxylase carboxyl transferase subunit alpha (327 aa).

A CoA carboxyltransferase C-terminal domain is found at 46–299 (LEARAIQLRR…RQVLLRHLKD (254 aa)).

Belongs to the AccA family. In terms of assembly, acetyl-CoA carboxylase is a heterohexamer composed of biotin carboxyl carrier protein (AccB), biotin carboxylase (AccC) and two subunits each of ACCase subunit alpha (AccA) and ACCase subunit beta (AccD).

Its subcellular location is the cytoplasm. It catalyses the reaction N(6)-carboxybiotinyl-L-lysyl-[protein] + acetyl-CoA = N(6)-biotinyl-L-lysyl-[protein] + malonyl-CoA. It participates in lipid metabolism; malonyl-CoA biosynthesis; malonyl-CoA from acetyl-CoA: step 1/1. Its function is as follows. Component of the acetyl coenzyme A carboxylase (ACC) complex. First, biotin carboxylase catalyzes the carboxylation of biotin on its carrier protein (BCCP) and then the CO(2) group is transferred by the carboxyltransferase to acetyl-CoA to form malonyl-CoA. The sequence is that of Acetyl-coenzyme A carboxylase carboxyl transferase subunit alpha from Synechococcus elongatus (strain ATCC 33912 / PCC 7942 / FACHB-805) (Anacystis nidulans R2).